Here is a 110-residue protein sequence, read N- to C-terminus: UPF0122 protein SAR1212 (110 aa).

Belongs to the UPF0122 family.

Its function is as follows. Might take part in the signal recognition particle (SRP) pathway. This is inferred from the conservation of its genetic proximity to ftsY/ffh. May be a regulatory protein. The protein is UPF0122 protein SAR1212 of Staphylococcus aureus (strain MRSA252).